A 102-amino-acid chain; its full sequence is RNA-binding protein Hfq (102 aa).

Residues 9–68 (DPFLNALRRERVPVSIYLVNGIKLQGQIESFDQFVILLKNTVSQMVYKHAISTVVPSRPV) enclose the Sm domain. The tract at residues 63–102 (VPSRPVSHHSNNAGGGTSSNYHHGSSAQGTSAQQDSEETE) is disordered. The segment covering 70–96 (HHSNNAGGGTSSNYHHGSSAQGTSAQQ) has biased composition (polar residues).

Belongs to the Hfq family. Homohexamer.

In terms of biological role, RNA chaperone that binds small regulatory RNA (sRNAs) and mRNAs to facilitate mRNA translational regulation in response to envelope stress, environmental stress and changes in metabolite concentrations. Also binds with high specificity to tRNAs. This is RNA-binding protein Hfq from Citrobacter koseri (strain ATCC BAA-895 / CDC 4225-83 / SGSC4696).